The primary structure comprises 141 residues: MNKGEDNLVRTSITVPEQLLQKVNELIASGYFASRSEIFRQALREYLQRIEWTERVGDEEYFGALTYVFQHERAEPELVKVQHEFTDVIISTTHIHVSPEKCLEVLLLQGPGKRIAELAKRIRGVRGVEQAKLTVVSSEGE.

Residues H83, H94, H96, and C102 each contribute to the Ni(2+) site.

Belongs to the transcriptional regulatory CopG/NikR family. Ni(2+) is required as a cofactor.

In terms of biological role, transcriptional regulator. The sequence is that of Putative nickel-responsive regulator from Methanopyrus kandleri (strain AV19 / DSM 6324 / JCM 9639 / NBRC 100938).